We begin with the raw amino-acid sequence, 152 residues long: Interleukin-3 (152 aa).

A signal peptide spans 1–19; sequence MSRLPVLLLLQLLVRPGLQ. 2 N-linked (GlcNAc...) asparagine glycosylation sites follow: Asn-34 and Asn-89. Cys-35 and Cys-103 are disulfide-bonded.

This sequence belongs to the IL-3 family. As to quaternary structure, interacts with IL3RA. Activated T-cells, mast cells, natural killer cells.

The protein localises to the secreted. Its function is as follows. Cytokine secreted predominantly by activated T-lymphocytes as well as mast cells and osteoblastic cells that controls the production and differentiation of hematopoietic progenitor cells into lineage-restricted cells. Also stimulates mature basophils, eosinophils, and monocytes to become functionally activated. In addition, plays an important role in neural cell proliferation and survival. Participates as well in bone homeostasis and inhibits osteoclast differentiation by preventing NF-kappa-B nuclear translocation and activation. Mechanistically, exerts its biological effects through a receptor composed of IL3RA subunit and a signal transducing subunit IL3RB. Receptor stimulation results in the rapid activation of JAK2 kinase activity leading to STAT5-mediated transcriptional program. Alternatively, contributes to cell survival under oxidative stress in non-hematopoietic systems by activating pathways mediated by PI3K/AKT and ERK. In Homo sapiens (Human), this protein is Interleukin-3.